Consider the following 343-residue polypeptide: MKLKTKTMEWTGNSLRLLDQRKLPFIEEYVECKTHEEVAHAIKEMIVRGAPAIGVTAAFGYVLGFREYRSGDLKEWMKQVKEVLSRTRPTAVNLFWALNRMEKVFLENLKNENLGEILEEEAMKMAQEDIETNRAIGRNGAELIEDGSTILTHCNAGALATVDYGTALGVIRAAVEAGKRVRVFADETRPYLQGARLTAWELMKDGIEVYVITDNMAGWLMKRGMIDAVVVGADRIALNGDTANKIGTYSLAVLAKRNNVPFYVAAPISTIDPTIKSGDEIPIEERRAEEVTHCGGNRIAPEGVKVLNPAFDVTENSLITAIITEKGVIKPPFEENIKKILGV.

Substrate is bound by residues 48–50 (RGA), Arg88, and Gln193. Residue Asp234 is the Proton donor of the active site. Substrate is bound at residue 244–245 (NK).

Belongs to the eIF-2B alpha/beta/delta subunits family. MtnA subfamily.

The catalysed reaction is 5-(methylsulfanyl)-alpha-D-ribose 1-phosphate = 5-(methylsulfanyl)-D-ribulose 1-phosphate. It functions in the pathway amino-acid biosynthesis; L-methionine biosynthesis via salvage pathway; L-methionine from S-methyl-5-thio-alpha-D-ribose 1-phosphate: step 1/6. Functionally, catalyzes the interconversion of methylthioribose-1-phosphate (MTR-1-P) into methylthioribulose-1-phosphate (MTRu-1-P). The polypeptide is Methylthioribose-1-phosphate isomerase (Thermotoga neapolitana (strain ATCC 49049 / DSM 4359 / NBRC 107923 / NS-E)).